Reading from the N-terminus, the 224-residue chain is Phosphoribosylformylglycinamidine synthase subunit PurQ (224 aa).

The 223-residue stretch at 2–224 (KVTILQFPGT…IKMLQGFLRA (223 aa)) folds into the Glutamine amidotransferase type-1 domain. C86 serves as the catalytic Nucleophile. Residues H200 and E202 contribute to the active site.

As to quaternary structure, part of the FGAM synthase complex composed of 1 PurL, 1 PurQ and 2 PurS subunits.

Its subcellular location is the cytoplasm. It carries out the reaction N(2)-formyl-N(1)-(5-phospho-beta-D-ribosyl)glycinamide + L-glutamine + ATP + H2O = 2-formamido-N(1)-(5-O-phospho-beta-D-ribosyl)acetamidine + L-glutamate + ADP + phosphate + H(+). The enzyme catalyses L-glutamine + H2O = L-glutamate + NH4(+). The protein operates within purine metabolism; IMP biosynthesis via de novo pathway; 5-amino-1-(5-phospho-D-ribosyl)imidazole from N(2)-formyl-N(1)-(5-phospho-D-ribosyl)glycinamide: step 1/2. Functionally, part of the phosphoribosylformylglycinamidine synthase complex involved in the purines biosynthetic pathway. Catalyzes the ATP-dependent conversion of formylglycinamide ribonucleotide (FGAR) and glutamine to yield formylglycinamidine ribonucleotide (FGAM) and glutamate. The FGAM synthase complex is composed of three subunits. PurQ produces an ammonia molecule by converting glutamine to glutamate. PurL transfers the ammonia molecule to FGAR to form FGAM in an ATP-dependent manner. PurS interacts with PurQ and PurL and is thought to assist in the transfer of the ammonia molecule from PurQ to PurL. This Sulfurimonas denitrificans (strain ATCC 33889 / DSM 1251) (Thiomicrospira denitrificans (strain ATCC 33889 / DSM 1251)) protein is Phosphoribosylformylglycinamidine synthase subunit PurQ.